A 603-amino-acid polypeptide reads, in one-letter code: F-box only protein 46 (603 aa).

Residues 18–54 (SKYSQNQPRPPSTALKPPVCPDTSSGTEPDHRPAHLE) form a disordered region. Phosphoserine is present on residues serine 21 and serine 67. Disordered stretches follow at residues 113-165 (SRAS…SSGD), 235-301 (EAQR…TRAK), 332-359 (EASE…ARDC), and 412-442 (QSRG…GTTD). Threonine 347 bears the Phosphothreonine mark. Composition is skewed to pro residues over residues 347–356 (TPPAPPPPPA) and 417–426 (EGPPEPPPAD). Positions 470–522 (RQYMLLLPEHVLVKIFSFLPTRALAALKCTCHHFKGIIEAFGVRATDSRWSRD) constitute an F-box domain.

In terms of assembly, part of a SCF (SKP1-cullin-F-box) protein ligase complex SCF(FBXO46) composed of CUL1, SKP1, RBX1 and FBXO46. In terms of processing, phosphorylated by ATM in response to DNA damage, promoting ubiquitination and degradation by the SCF(FBXO31) complex. ATM-phosphorylated FBXO46 is ubiquitinated and degradaded by the SCF(FBXO31) complex in response to DNA damage.

It participates in protein modification; protein ubiquitination. In terms of biological role, substrate-recognition component of the SCF(FBXO46) protein ligase complex, which mediates the ubiquitination and degradation of target proteins. In absence of stress, the SCF(FBXO46) complex catalyzes ubiquitination and degradation of MTOR-phosphorylated FBXO31. The sequence is that of F-box only protein 46 (Fbxo46) from Mus musculus (Mouse).